The following is a 98-amino-acid chain: Alpha-elicitin DRE-alpha (98 aa).

3 disulfides stabilise this stretch: C3-C71, C27-C56, and C51-C95.

The protein belongs to the elicitin family.

It localises to the secreted. In terms of biological role, induces local and distal defense responses (incompatible hypersensitive reaction) in plants from the solanaceae and cruciferae families. Elicits leaf necrosis and causes the accumulation of pathogenesis-related proteins. Might interact with the lipidic molecules of the plasma membrane. The sequence is that of Alpha-elicitin DRE-alpha from Phytophthora drechsleri.